We begin with the raw amino-acid sequence, 505 residues long: Ribosomal RNA small subunit methyltransferase F (505 aa).

Residues 123-129 (ASAPGSK), E147, D174, and D192 each bind S-adenosyl-L-methionine. C245 functions as the Nucleophile in the catalytic mechanism. The tract at residues 409-437 (GTNANNNSNTNPNNNANTNPNNNSNTNPR) is disordered. Low complexity predominate over residues 410 to 435 (TNANNNSNTNPNNNANTNPNNNSNTN).

The protein belongs to the class I-like SAM-binding methyltransferase superfamily. RsmB/NOP family.

The protein localises to the cytoplasm. It catalyses the reaction cytidine(1407) in 16S rRNA + S-adenosyl-L-methionine = 5-methylcytidine(1407) in 16S rRNA + S-adenosyl-L-homocysteine + H(+). Its function is as follows. Specifically methylates the cytosine at position 1407 (m5C1407) of 16S rRNA. In Shewanella denitrificans (strain OS217 / ATCC BAA-1090 / DSM 15013), this protein is Ribosomal RNA small subunit methyltransferase F.